We begin with the raw amino-acid sequence, 558 residues long: Putative polypeptide N-acetylgalactosaminyltransferase 13 (558 aa).

Topologically, residues 1 to 12 (MHAGGKYCGPRH) are cytoplasmic. A helical; Signal-anchor for type II membrane protein transmembrane segment spans residues 13–32 (CSFYIIAFLICQLFFLVIFI). Residues 33–558 (RNDDASSANE…QFALEMEGQT (526 aa)) lie on the Lumenal side of the membrane. N-linked (GlcNAc...) asparagine glycosylation is found at asparagine 48 and asparagine 111. 4 cysteine pairs are disulfide-bonded: cysteine 97–cysteine 335, cysteine 326–cysteine 412, cysteine 445–cysteine 460, and cysteine 484–cysteine 498. Residues 109–225 (EANVSVVISF…EGWLEPLLER (117 aa)) form a catalytic subdomain A region. Positions 150 and 186 each coordinate substrate. Residue aspartate 209 coordinates Mn(2+). Serine 210 contributes to the substrate binding site. Histidine 211 contributes to the Mn(2+) binding site. The interval 281–343 (PYQSPAFAGG…PCSRIGHIFR (63 aa)) is catalytic subdomain B. Tryptophan 312 provides a ligand contact to substrate. Histidine 340 contributes to the Mn(2+) binding site. 2 residues coordinate substrate: arginine 343 and histidine 346. The Ricin B-type lectin domain maps to 422 to 556 (VSPELRMHFD…SFQFALEMEG (135 aa)). An N-linked (GlcNAc...) asparagine glycan is attached at asparagine 501. Cysteine 525 and cysteine 539 are disulfide-bonded.

The protein belongs to the glycosyltransferase 2 family. GalNAc-T subfamily. It depends on Mn(2+) as a cofactor. During embryonic stages 16-17, very weak expression in the midgut.

Its subcellular location is the golgi apparatus membrane. The catalysed reaction is L-seryl-[protein] + UDP-N-acetyl-alpha-D-galactosamine = a 3-O-[N-acetyl-alpha-D-galactosaminyl]-L-seryl-[protein] + UDP + H(+). It catalyses the reaction L-threonyl-[protein] + UDP-N-acetyl-alpha-D-galactosamine = a 3-O-[N-acetyl-alpha-D-galactosaminyl]-L-threonyl-[protein] + UDP + H(+). It participates in protein modification; protein glycosylation. May catalyze the initial reaction in O-linked oligosaccharide biosynthesis, the transfer of an N-acetyl-D-galactosamine residue to a serine or threonine residue on the protein receptor. This Drosophila melanogaster (Fruit fly) protein is Putative polypeptide N-acetylgalactosaminyltransferase 13 (pgant13).